The following is a 475-amino-acid chain: Lactate utilization protein B (475 aa).

4Fe-4S ferredoxin-type domains lie at 304 to 334 and 353 to 382; these read GTEF…GHSY and YDDY…LHEL. The [4Fe-4S] cluster site is built by cysteine 313, cysteine 316, cysteine 319, cysteine 323, cysteine 366, cysteine 369, and cysteine 373.

This sequence belongs to the LutB/YkgF family.

Functionally, is involved in L-lactate degradation and allows cells to grow with lactate as the sole carbon source. Has probably a role as an electron transporter during oxidation of L-lactate. The sequence is that of Lactate utilization protein B from Geobacillus sp. (strain WCH70).